A 203-amino-acid chain; its full sequence is Outer-membrane lipoprotein carrier protein (203 aa).

Residues 1–21 (MKKLIISCCLLATFSAAGAWA) form the signal peptide. Residues 174–203 (ALKSQQSGPISADKFKFRPPKGVTVDDQRQ) are disordered.

This sequence belongs to the LolA family. In terms of assembly, monomer.

It is found in the periplasm. In terms of biological role, participates in the translocation of lipoproteins from the inner membrane to the outer membrane. Only forms a complex with a lipoprotein if the residue after the N-terminal Cys is not an aspartate (The Asp acts as a targeting signal to indicate that the lipoprotein should stay in the inner membrane). This chain is Outer-membrane lipoprotein carrier protein, found in Erwinia tasmaniensis (strain DSM 17950 / CFBP 7177 / CIP 109463 / NCPPB 4357 / Et1/99).